The primary structure comprises 413 residues: Serine/threonine transporter SstT (413 aa).

The next 9 membrane-spanning stretches (helical) occupy residues G14–S34, L44–V64, I82–F102, A141–L161, G178–V198, L217–F237, I290–L310, L330–I350, and L356–V376.

Belongs to the dicarboxylate/amino acid:cation symporter (DAACS) (TC 2.A.23) family.

The protein resides in the cell inner membrane. It catalyses the reaction L-serine(in) + Na(+)(in) = L-serine(out) + Na(+)(out). It carries out the reaction L-threonine(in) + Na(+)(in) = L-threonine(out) + Na(+)(out). Its function is as follows. Involved in the import of serine and threonine into the cell, with the concomitant import of sodium (symport system). The polypeptide is Serine/threonine transporter SstT (Edwardsiella ictaluri (strain 93-146)).